A 387-amino-acid polypeptide reads, in one-letter code: Phosphoglycerate kinase (387 aa).

Residues 21–23, R36, 59–62, R113, and R146 each bind substrate; these read DLN and HLGR. Residues K197, E314, and 340 to 343 each bind ATP; that span reads GGDT.

The protein belongs to the phosphoglycerate kinase family. In terms of assembly, monomer.

It localises to the cytoplasm. The enzyme catalyses (2R)-3-phosphoglycerate + ATP = (2R)-3-phospho-glyceroyl phosphate + ADP. It participates in carbohydrate degradation; glycolysis; pyruvate from D-glyceraldehyde 3-phosphate: step 2/5. This chain is Phosphoglycerate kinase, found in Pseudomonas syringae pv. syringae (strain B728a).